Here is a 234-residue protein sequence, read N- to C-terminus: Exotoxin type G (234 aa).

An N-terminal signal peptide occupies residues 1-24 (MKTNILTIIILSCVFSYGSQLAYA).

It belongs to the staphylococcal/streptococcal toxin family.

Functionally, mitogenic for human peripheral blood lymphocytes. This chain is Exotoxin type G (speG), found in Streptococcus pyogenes serotype M1.